We begin with the raw amino-acid sequence, 296 residues long: Cadherin-4 (296 aa).

3 consecutive Cadherin domains span residues 1-101 (NVPE…RPEF), 102-216 (INQV…PPEF), and 217-296 (TTST…MLTI). Residues 1-296 (NVPENSRGPF…ELNRAFMLTI (296 aa)) lie on the Extracellular side of the membrane. Residues Asn-107 and Asn-236 are each glycosylated (N-linked (GlcNAc...) asparagine).

It is found in the cell membrane. Cadherins are calcium-dependent cell adhesion proteins. They preferentially interact with themselves in a homophilic manner in connecting cells; cadherins may thus contribute to the sorting of heterogeneous cell types. May play an important role in retinal development. The chain is Cadherin-4 (Cdh4) from Rattus norvegicus (Rat).